A 194-amino-acid polypeptide reads, in one-letter code: Adenylate kinase (194 aa).

11 to 16 (GSGKGT) is an ATP binding site. Positions 31-60 (STGELLRAEIKAQTELGQAAAGYINEGHLV) are NMP. AMP contacts are provided by residues threonine 32, arginine 37, 58–60 (HLV), 86–89 (GFPR), and glutamine 93. The LID stretch occupies residues 127-137 (NRGKVSGRSDD). Residue arginine 128 coordinates ATP. AMP is bound by residues arginine 134 and arginine 145. ATP is bound at residue glycine 173.

This sequence belongs to the adenylate kinase family. Monomer.

It is found in the cytoplasm. It catalyses the reaction AMP + ATP = 2 ADP. Its pathway is purine metabolism; AMP biosynthesis via salvage pathway; AMP from ADP: step 1/1. Functionally, catalyzes the reversible transfer of the terminal phosphate group between ATP and AMP. Plays an important role in cellular energy homeostasis and in adenine nucleotide metabolism. The sequence is that of Adenylate kinase from Porphyromonas gingivalis (strain ATCC BAA-308 / W83).